The sequence spans 270 residues: Peflin (270 aa).

Residues 1–97 (MSYQYGQGYS…YRQQGSAGNV (97 aa)) form a disordered region. 5 consecutive repeat copies span residues 22–30 (PPRAPYAGG), 44–54 (PPGQQYGGGSP), 62–70 (GPRAPYGGG), 72–81 (APGGPYGGYG), and 83–91 (PQGGPYRQQ). Residues 22-91 (PPRAPYAGGP…QPQGGPYRQQ (70 aa)) form a 5 X 9 AA approximate tandem repeat of [AP]-P-G-G-P-Y-G-G-P-P region. 2 stretches are compositionally biased toward low complexity: residues 26-47 (PYAGGPAAGQYGSPYGSAPPGQ) and 55-66 (YGSYGQPGPRAP). The segment covering 67–84 (YGGGQAPGGPYGGYGQPQ) has biased composition (gly residues). EF-hand domains are found at residues 100–135 (GVNPEAYQWFSTVDSDQSGYINAKELKQALMNFNNS), 141–169 (TCIMMLNMFDKTKSGRVDVFGFSALWTFL), 170–202 (QQWRAAFQQFDRDRSGSINTNEMHQALSQMGYN), 203–239 (LSPQFIQELVNRYSVRGGTGVLQLDRFIQVCTQLQSM), and 240–269 (TQAFREKDTGMTGNVRMSYEDFLSSAITRL). Ca(2+) is bound by residues aspartate 113, aspartate 115, serine 117, tyrosine 119, and glutamate 124. Ca(2+) is bound by residues aspartate 180, aspartate 182, serine 184, serine 186, and glutamate 191.

Heterodimer; heterodimerizes (via the EF-hand 5) with pdcd6.

The protein resides in the cytoplasm. The protein localises to the endoplasmic reticulum. It is found in the membrane. It localises to the cytoplasmic vesicle. Its subcellular location is the COPII-coated vesicle membrane. In terms of biological role, calcium-binding protein that acts as an adapter that bridges unrelated proteins or stabilizes weak protein-protein complexes in response to calcium. Acts as a negative regulator of ER-Golgi transport. The chain is Peflin from Danio rerio (Zebrafish).